A 131-amino-acid polypeptide reads, in one-letter code: Fumarate reductase subunit C (131 aa).

Helical transmembrane passes span 60-80 and 110-130; these read FVGFLQNPVVLILNLIVLAAA and IKGLWAVTAVVTAVVLFVALF.

It belongs to the FrdC family. Part of an enzyme complex containing four subunits: a flavoprotein (FrdA), an iron-sulfur protein (FrdB), and two hydrophobic anchor proteins (FrdC and FrdD).

Its subcellular location is the cell inner membrane. Two distinct, membrane-bound, FAD-containing enzymes are responsible for the catalysis of fumarate and succinate interconversion; fumarate reductase is used in anaerobic growth, and succinate dehydrogenase is used in aerobic growth. Anchors the catalytic components of the fumarate reductase complex to the cell inner membrane, binds quinones. The sequence is that of Fumarate reductase subunit C from Enterobacter sp. (strain 638).